The following is a 495-amino-acid chain: Geraniol 8-hydroxylase (495 aa).

The helical transmembrane segment at 5 to 25 (FLTIAIGFLFTITLYQALNFF) threads the bilayer. Cys-438 is a binding site for heme.

This sequence belongs to the cytochrome P450 family. It depends on heme as a cofactor. As to expression, expressed in leaves, stems and roots.

It localises to the endoplasmic reticulum membrane. The enzyme catalyses (2E)-geraniol + reduced [NADPH--hemoprotein reductase] + O2 = (6E)-8-hydroxygeraniol + oxidized [NADPH--hemoprotein reductase] + H2O + H(+). Hydroxylase involved in the biosynthesis of hydroxygeraniol, a precursor of the iridoid monoterpenoid swertiamarin. In Swertia mussotii (Felwort), this protein is Geraniol 8-hydroxylase (CYP76B10).